The following is a 117-amino-acid chain: Ribosome-binding factor A (117 aa).

Belongs to the RbfA family. In terms of assembly, monomer. Binds 30S ribosomal subunits, but not 50S ribosomal subunits or 70S ribosomes.

It is found in the cytoplasm. In terms of biological role, one of several proteins that assist in the late maturation steps of the functional core of the 30S ribosomal subunit. Associates with free 30S ribosomal subunits (but not with 30S subunits that are part of 70S ribosomes or polysomes). Required for efficient processing of 16S rRNA. May interact with the 5'-terminal helix region of 16S rRNA. This is Ribosome-binding factor A from Streptococcus suis (strain 98HAH33).